Consider the following 357-residue polypeptide: Undecaprenyl-phosphate alpha-N-acetylglucosaminyl 1-phosphate transferase (357 aa).

7 helical membrane passes run 40-60 (GAIP…FYLL), 64-84 (QMRL…IGMI), 124-144 (FQLT…IAAI), 183-203 (WSFA…GIPF), 209-229 (VFMG…ILLL), 238-258 (MNPV…IAIM), and 291-311 (FLLI…GEIF).

It belongs to the glycosyltransferase 4 family. WecA subfamily. Mg(2+) is required as a cofactor. Requires Mn(2+) as cofactor.

It is found in the cell inner membrane. The enzyme catalyses di-trans,octa-cis-undecaprenyl phosphate + UDP-N-acetyl-alpha-D-glucosamine = N-acetyl-alpha-D-glucosaminyl-di-trans,octa-cis-undecaprenyl diphosphate + UMP. The protein operates within bacterial outer membrane biogenesis; LPS O-antigen biosynthesis. Functionally, catalyzes the transfer of the GlcNAc-1-phosphate moiety from UDP-GlcNAc onto the carrier lipid undecaprenyl phosphate (C55-P), yielding GlcNAc-pyrophosphoryl-undecaprenyl (GlcNAc-PP-C55). This is Undecaprenyl-phosphate alpha-N-acetylglucosaminyl 1-phosphate transferase from Pasteurella multocida (strain Pm70).